A 655-amino-acid chain; its full sequence is Probable potassium transport system protein Kup (655 aa).

12 consecutive transmembrane segments (helical) span residues 19–39, 42–62, 102–122, 132–152, 161–181, 214–234, 246–266, 282–302, 338–358, 370–390, 395–415, and 420–440; these read GLLI…LYVM, IAGG…CVFW, VWPA…TPPI, LIFN…VMLF, IVGK…ATLG, SGFW…ALYS, ISWI…GAWI, IMPE…AIIA, LFIP…VLWF, LAIN…LLII, FIWV…FLVA, and FFHG…IMII.

This sequence belongs to the HAK/KUP transporter (TC 2.A.72) family.

It localises to the cell inner membrane. It catalyses the reaction K(+)(in) + H(+)(in) = K(+)(out) + H(+)(out). Transport of potassium into the cell. Likely operates as a K(+):H(+) symporter. This is Probable potassium transport system protein Kup from Cytophaga hutchinsonii (strain ATCC 33406 / DSM 1761 / CIP 103989 / NBRC 15051 / NCIMB 9469 / D465).